The following is a 486-amino-acid chain: Glutamyl-tRNA(Gln) amidotransferase subunit A (486 aa).

Catalysis depends on charge relay system residues lysine 76 and serine 151. Residue serine 175 is the Acyl-ester intermediate of the active site.

The protein belongs to the amidase family. GatA subfamily. In terms of assembly, heterotrimer of A, B and C subunits.

It carries out the reaction L-glutamyl-tRNA(Gln) + L-glutamine + ATP + H2O = L-glutaminyl-tRNA(Gln) + L-glutamate + ADP + phosphate + H(+). Functionally, allows the formation of correctly charged Gln-tRNA(Gln) through the transamidation of misacylated Glu-tRNA(Gln) in organisms which lack glutaminyl-tRNA synthetase. The reaction takes place in the presence of glutamine and ATP through an activated gamma-phospho-Glu-tRNA(Gln). The chain is Glutamyl-tRNA(Gln) amidotransferase subunit A from Marinomonas sp. (strain MWYL1).